Reading from the N-terminus, the 484-residue chain is Glycogen synthase (484 aa).

Position 15 (K15) interacts with ADP-alpha-D-glucose.

It belongs to the glycosyltransferase 1 family. Bacterial/plant glycogen synthase subfamily.

The catalysed reaction is [(1-&gt;4)-alpha-D-glucosyl](n) + ADP-alpha-D-glucose = [(1-&gt;4)-alpha-D-glucosyl](n+1) + ADP + H(+). The protein operates within glycan biosynthesis; glycogen biosynthesis. In terms of biological role, synthesizes alpha-1,4-glucan chains using ADP-glucose. The protein is Glycogen synthase of Koribacter versatilis (strain Ellin345).